The sequence spans 338 residues: DNA-directed RNA polymerase subunit alpha (338 aa).

Positions 1–234 (MIHKNWAELI…DQLSIFVNFE (234 aa)) are alpha N-terminal domain (alpha-NTD). Residues 250–338 (FNPLLLKKVD…DLAKRFEDQF (89 aa)) are alpha C-terminal domain (alpha-CTD).

Belongs to the RNA polymerase alpha chain family. Homodimer. The RNAP catalytic core consists of 2 alpha, 1 beta, 1 beta' and 1 omega subunit. When a sigma factor is associated with the core the holoenzyme is formed, which can initiate transcription.

It catalyses the reaction RNA(n) + a ribonucleoside 5'-triphosphate = RNA(n+1) + diphosphate. In terms of biological role, DNA-dependent RNA polymerase catalyzes the transcription of DNA into RNA using the four ribonucleoside triphosphates as substrates. The chain is DNA-directed RNA polymerase subunit alpha from Cereibacter sphaeroides (strain ATCC 17025 / ATH 2.4.3) (Rhodobacter sphaeroides).